The following is a 225-amino-acid chain: MMSRETASSEITPELLLRAYACGIFPMAESVDDPTLFWVEPKLRGVIPLESFRISSRLARTVRSDSFAVTVDTAFNAVIDGCAAPQPGRDNTWINRRIRELYIALHELGHCHSVEVWQGDELVGGLYGVRLGRAFFGESMFHIARDASKVALVHLVARLIAGGFVLLDTQFVTDHLRGFGAIEIPRRRYRALLDAALEGRADFAALPLDQPVPGTDALKIIADRA.

This sequence belongs to the L/F-transferase family.

The protein resides in the cytoplasm. It catalyses the reaction N-terminal L-lysyl-[protein] + L-leucyl-tRNA(Leu) = N-terminal L-leucyl-L-lysyl-[protein] + tRNA(Leu) + H(+). It carries out the reaction N-terminal L-arginyl-[protein] + L-leucyl-tRNA(Leu) = N-terminal L-leucyl-L-arginyl-[protein] + tRNA(Leu) + H(+). The catalysed reaction is L-phenylalanyl-tRNA(Phe) + an N-terminal L-alpha-aminoacyl-[protein] = an N-terminal L-phenylalanyl-L-alpha-aminoacyl-[protein] + tRNA(Phe). Functionally, functions in the N-end rule pathway of protein degradation where it conjugates Leu, Phe and, less efficiently, Met from aminoacyl-tRNAs to the N-termini of proteins containing an N-terminal arginine or lysine. The sequence is that of Leucyl/phenylalanyl-tRNA--protein transferase from Nitrobacter hamburgensis (strain DSM 10229 / NCIMB 13809 / X14).